Here is a 556-residue protein sequence, read N- to C-terminus: Formate--tetrahydrofolate ligase (556 aa).

Residue 65-72 (TPAGEGKS) participates in ATP binding.

Belongs to the formate--tetrahydrofolate ligase family.

It catalyses the reaction (6S)-5,6,7,8-tetrahydrofolate + formate + ATP = (6R)-10-formyltetrahydrofolate + ADP + phosphate. The protein operates within one-carbon metabolism; tetrahydrofolate interconversion. The protein is Formate--tetrahydrofolate ligase of Clostridium perfringens (strain ATCC 13124 / DSM 756 / JCM 1290 / NCIMB 6125 / NCTC 8237 / Type A).